A 274-amino-acid polypeptide reads, in one-letter code: uncharacterized protein (274 aa).

Basic and acidic residues predominate over residues 1–20 (MSLEKSLDEIINERTNGFDH). Disordered stretches follow at residues 1 to 63 (MSLE…HDLD), 148 to 217 (NLKG…EDLD), and 230 to 274 (ASTV…MEAV). Residues 21 to 44 (KHSRRRGSQNRISKKSRLTYKFKR) are compositionally biased toward basic residues. Basic and acidic residues predominate over residues 45–63 (ASKEHNSSPDDGPWQHDLD). One can recognise an RRM domain in the interval 85–161 (FGVRVENLHY…SEIQISKKSP (77 aa)). A compositionally biased stretch (polar residues) spans 148–160 (NLKGSEIQISKKS). Low complexity-rich tracts occupy residues 181–190 (SSRSNRGFNR) and 200–211 (RSSSKKSSNNSI). Residues 230 to 245 (ASTVSSHSSQDFTPSI) are compositionally biased toward polar residues. The segment covering 263 to 274 (LTEEMDLQMEAV) has biased composition (acidic residues).

This is an uncharacterized protein from Schizosaccharomyces pombe (strain 972 / ATCC 24843) (Fission yeast).